Consider the following 319-residue polypeptide: Thioredoxin reductase (319 aa).

Position 36-43 (36-43) interacts with FAD; sequence TGTNKGGQ. Cysteines 136 and 139 form a disulfide. 288 to 297 serves as a coordination point for FAD; the sequence is DVIDHVYRQA.

The protein belongs to the class-II pyridine nucleotide-disulfide oxidoreductase family. In terms of assembly, homodimer. FAD is required as a cofactor.

It is found in the cytoplasm. It carries out the reaction [thioredoxin]-dithiol + NADP(+) = [thioredoxin]-disulfide + NADPH + H(+). The protein is Thioredoxin reductase (trxB) of Buchnera aphidicola subsp. Acyrthosiphon pisum (strain APS) (Acyrthosiphon pisum symbiotic bacterium).